A 448-amino-acid polypeptide reads, in one-letter code: U-box domain-containing protein 30 (448 aa).

A U-box domain is found at 63 to 137; sequence DIPSVFICPI…YTWFSQKYVL (75 aa). ARM repeat units follow at residues 179-219 and 221-260; these read LMAR…SLDL and SDSK…GLVE.

It carries out the reaction S-ubiquitinyl-[E2 ubiquitin-conjugating enzyme]-L-cysteine + [acceptor protein]-L-lysine = [E2 ubiquitin-conjugating enzyme]-L-cysteine + N(6)-ubiquitinyl-[acceptor protein]-L-lysine.. Its pathway is protein modification; protein ubiquitination. Its function is as follows. Functions as an E3 ubiquitin ligase. This chain is U-box domain-containing protein 30 (PUB30), found in Arabidopsis thaliana (Mouse-ear cress).